The primary structure comprises 58 residues: KKTSRLFTLVLIVLAMNVMMAIISDPVVEAVGCEECPMHCKGKMAKPTCYDGVCNCNV.

Positions 1–21 (KKTSRLFTLVLIVLAMNVMMA) are cleaved as a signal peptide. The propeptide occupies 22–30 (IISDPVVEA). 3 disulfide bridges follow: Cys-33/Cys-49, Cys-36/Cys-54, and Cys-40/Cys-56.

This sequence belongs to the short scorpion toxin superfamily. Potassium channel inhibitor family. Alpha-KTx 09 subfamily. Expressed by the venom gland.

It localises to the secreted. Functionally, potassium channel inhibitor. This Buthus israelis (Israeli scorpion) protein is Potassium channel toxin alpha-KTx 9.9.